The chain runs to 342 residues: Methylthioribose-1-phosphate isomerase (342 aa).

Substrate is bound by residues 44 to 46 (RGA), Arg87, and Gln194. Asp235 serves as the catalytic Proton donor. 245-246 (NK) provides a ligand contact to substrate.

The protein belongs to the eIF-2B alpha/beta/delta subunits family. MtnA subfamily.

The enzyme catalyses 5-(methylsulfanyl)-alpha-D-ribose 1-phosphate = 5-(methylsulfanyl)-D-ribulose 1-phosphate. It participates in amino-acid biosynthesis; L-methionine biosynthesis via salvage pathway; L-methionine from S-methyl-5-thio-alpha-D-ribose 1-phosphate: step 1/6. In terms of biological role, catalyzes the interconversion of methylthioribose-1-phosphate (MTR-1-P) into methylthioribulose-1-phosphate (MTRu-1-P). The protein is Methylthioribose-1-phosphate isomerase of Acetivibrio thermocellus (strain ATCC 27405 / DSM 1237 / JCM 9322 / NBRC 103400 / NCIMB 10682 / NRRL B-4536 / VPI 7372) (Clostridium thermocellum).